We begin with the raw amino-acid sequence, 54 residues long: Conotoxin Cal6.17 (54 aa).

Positions 1 to 19 are cleaved as a signal peptide; sequence MSGTGVLLLTLLLLVTMAT. 3 disulfide bridges follow: Cys24–Cys39, Cys32–Cys49, and Cys38–Cys53.

In terms of tissue distribution, expressed by the venom duct.

Its subcellular location is the secreted. Probable neurotoxin. This chain is Conotoxin Cal6.17, found in Californiconus californicus (California cone).